Consider the following 271-residue polypeptide: Metal-staphylopine import system ATP-binding protein CntD (271 aa).

The 246-residue stretch at 6-251 folds into the ABC transporter domain; it reads VKHLTITDTW…PEHVYTKYLL (246 aa). Residue 38–45 coordinates ATP; it reads GESGSGKS.

It belongs to the ABC transporter superfamily. As to quaternary structure, the complex is composed of two ATP-binding proteins (CntD and CntF), two transmembrane proteins (CntB and CntC) and a solute-binding protein (CntA).

The protein resides in the cell membrane. Its activity is regulated as follows. Nickel/cobalt import is reduced in the presence of zinc. Its function is as follows. Part of the ABC transporter complex CntABCDF (Opp1) involved in the uptake of metal in complex with the metallophore staphylopine (StP). Involved in the import of divalent metals ions such as nickel, cobalt and zinc. Probably responsible for energy coupling to the transport system. Plays a major role in nickel/cobalt import in zinc-depleted conditions. Contributes to virulence. Required for full urease activity in vitro. This is Metal-staphylopine import system ATP-binding protein CntD from Staphylococcus aureus (strain NCTC 8325 / PS 47).